The sequence spans 602 residues: Cholinesterase (602 aa).

The signal sequence occupies residues 1 to 28 (MQSRSTVIYIRFVLWFLLLWVLFEKSHT). N-linked (GlcNAc...) asparagine glycans are attached at residues Asn-85 and Asn-134. 144-145 (GS) serves as a coordination point for substrate. Ser-226 (acyl-ester intermediate) is an active-site residue. At Ser-226 the chain carries Phosphoserine. N-linked (GlcNAc...) asparagine glycans are attached at residues Asn-269 and Asn-284. Glu-353 acts as the Charge relay system in catalysis. N-linked (GlcNAc...) asparagine glycosylation occurs at Asn-369. Catalysis depends on His-466, which acts as the Charge relay system. N-linked (GlcNAc...) asparagine glycosylation is found at Asn-483, Asn-509, Asn-513, and Asn-514.

It belongs to the type-B carboxylesterase/lipase family. Homotetramer; disulfide-linked. Dimer of dimers. In terms of tissue distribution, present in most cells except erythrocytes.

It localises to the secreted. It catalyses the reaction an acylcholine + H2O = a carboxylate + choline + H(+). Esterase with broad substrate specificity. Contributes to the inactivation of the neurotransmitter acetylcholine. Can degrade neurotoxic organophosphate esters. This chain is Cholinesterase (BCHE), found in Bos taurus (Bovine).